Reading from the N-terminus, the 332-residue chain is DNA-directed RNA polymerase subunit alpha (332 aa).

Residues 1–231 form an alpha N-terminal domain (alpha-NTD) region; it reads MVREKVTVST…DLFIPFLHME (231 aa). The alpha C-terminal domain (alpha-CTD) stretch occupies residues 262 to 332; sequence LSLESLFIDQ…FALDLPKNLN (71 aa).

This sequence belongs to the RNA polymerase alpha chain family. In plastids the minimal PEP RNA polymerase catalytic core is composed of four subunits: alpha, beta, beta', and beta''. When a (nuclear-encoded) sigma factor is associated with the core the holoenzyme is formed, which can initiate transcription.

The protein resides in the plastid. It carries out the reaction RNA(n) + a ribonucleoside 5'-triphosphate = RNA(n+1) + diphosphate. DNA-dependent RNA polymerase catalyzes the transcription of DNA into RNA using the four ribonucleoside triphosphates as substrates. The protein is DNA-directed RNA polymerase subunit alpha of Cuscuta japonica (Japanese dodder).